The following is a 157-amino-acid chain: MAKKQQTRSYTEAIQNRKARYEYQILETIVAGIELLGSEVKSVRLGKASLNESFATIHHDEVWLENMQITPYEFNHLDALEPKRSRKLLLHKEEIRRLQSKINEKGLTLIPLKAFFDKNGRLKVELALAKGKKLYDKRETIKGRENERHLQQLRKQY.

Belongs to the SmpB family.

Its subcellular location is the cytoplasm. Its function is as follows. Required for rescue of stalled ribosomes mediated by trans-translation. Binds to transfer-messenger RNA (tmRNA), required for stable association of tmRNA with ribosomes. tmRNA and SmpB together mimic tRNA shape, replacing the anticodon stem-loop with SmpB. tmRNA is encoded by the ssrA gene; the 2 termini fold to resemble tRNA(Ala) and it encodes a 'tag peptide', a short internal open reading frame. During trans-translation Ala-aminoacylated tmRNA acts like a tRNA, entering the A-site of stalled ribosomes, displacing the stalled mRNA. The ribosome then switches to translate the ORF on the tmRNA; the nascent peptide is terminated with the 'tag peptide' encoded by the tmRNA and targeted for degradation. The ribosome is freed to recommence translation, which seems to be the essential function of trans-translation. The polypeptide is SsrA-binding protein (Chlorobium luteolum (strain DSM 273 / BCRC 81028 / 2530) (Pelodictyon luteolum)).